Reading from the N-terminus, the 483-residue chain is Regulatory protein ViaA (483 aa).

It belongs to the ViaA family. Homodimer. Interacts with RavA.

The protein resides in the cytoplasm. In terms of biological role, component of the RavA-ViaA chaperone complex, which may act on the membrane to optimize the function of some of the respiratory chains. ViaA stimulates the ATPase activity of RavA. This chain is Regulatory protein ViaA, found in Shigella boydii serotype 18 (strain CDC 3083-94 / BS512).